The sequence spans 1409 residues: DNA-directed RNA polymerase subunit beta' (1409 aa).

4 residues coordinate Zn(2+): cysteine 70, cysteine 72, cysteine 85, and cysteine 88. Mg(2+) is bound by residues aspartate 461, aspartate 463, and aspartate 465. Zn(2+) is bound by residues cysteine 833, cysteine 907, cysteine 914, and cysteine 917. A disordered region spans residues 1389-1409; sequence EPVAQAAESEDVPDVSQQEAA.

It belongs to the RNA polymerase beta' chain family. The RNAP catalytic core consists of 2 alpha, 1 beta, 1 beta' and 1 omega subunit. When a sigma factor is associated with the core the holoenzyme is formed, which can initiate transcription. Mg(2+) serves as cofactor. The cofactor is Zn(2+).

It carries out the reaction RNA(n) + a ribonucleoside 5'-triphosphate = RNA(n+1) + diphosphate. In terms of biological role, DNA-dependent RNA polymerase catalyzes the transcription of DNA into RNA using the four ribonucleoside triphosphates as substrates. The protein is DNA-directed RNA polymerase subunit beta' of Pelobacter propionicus (strain DSM 2379 / NBRC 103807 / OttBd1).